A 1071-amino-acid polypeptide reads, in one-letter code: Exportin-1 (1071 aa).

The region spanning 46 to 112 (AQEVLTHLKE…KKYVVGLIIK (67 aa)) is the Importin N-terminal domain. HEAT repeat units lie at residues 217 to 240 (QNAP…PLGY), 241 to 277 (IFET…VSVS), 354 to 472 (MLLV…YVDT), 515 to 553 (RFLV…QYPR), 560 to 597 (KFLK…KCRR), and 602 to 639 (VQVG…AVGY). The segment at 327–450 (CTFLKEHGQL…VREFMKDTDS (124 aa)) is necessary for interaction with Ran and nuclear export complex formation. The residue at position 391 (serine 391) is a Phosphoserine. The tract at residues 411–481 (TVLSKVRLLM…TEIIMTKKLQ (71 aa)) is necessary for interaction with RANBP3. N6-acetyllysine is present on lysine 446. Threonine 448 is subject to Phosphothreonine. Serine 450 is subject to Phosphoserine. Residue tyrosine 454 is modified to Phosphotyrosine. An N6-acetyllysine modification is found at lysine 693. HEAT repeat units lie at residues 775-813 (NFVP…KLGG), 885-916 (TMRN…SFYQ), 917-954 (TYFC…NLVE), and 1002-1039 (FSLN…EERE). Position 1031 is a phosphoserine (serine 1031).

The protein belongs to the exportin family. Found in a U snRNA export complex with PHAX/RNUXA, NCBP1/CBP80, NCBP2/CBP20, RAN, XPO1 and m7G-capped RNA. Component of a nuclear export receptor complex composed of KPNB1, RAN, SNUPN and XPO1. Found in a trimeric export complex with SNUPN, RAN and XPO1. Found in a nuclear export complex with RANBP3 and RAN. Found in a 60S ribosomal subunit export complex with NMD3, RAN, XPO1. Interacts with DDX3X, NMD3, NUP42, NUP88, NUP214, RANBP3 and TERT. Interacts with NEMF (via its N-terminus). Interacts with the monomeric form of BIRC5/survivin deacetylated at 'Lys-129'. Interacts with SERTAD2; the interaction translocates SERTAD2 out of the nucleus. Interacts with ATF2. Interacts with SLC35G1 and STIM1. Interacts with DCAF8. Interacts with DTNBP1 and the interaction translocates DTNBP1 out of the nucleus. Interacts with CPEB3. Interacts with HAX1. Interacts with BOK; translocates to the cytoplasm. Interacts with HSP90AB1. Interacts with LRPPRC; interacts with LRPPRC alone and also when LRPPRC is in complex with EIF4E and with EIF4E sensitivity element (4ESE)-containing mRNAs to form an EIF4E-dependent mRNA export complex.

It localises to the cytoplasm. The protein localises to the nucleus. It is found in the nucleoplasm. Its subcellular location is the cajal body. The protein resides in the nucleolus. Mediates the nuclear export of cellular proteins (cargos) bearing a leucine-rich nuclear export signal (NES) and of RNAs. In the nucleus, in association with RANBP3, binds cooperatively to the NES on its target protein and to the GTPase Ran in its active GTP-bound form. Docking of this complex to the nuclear pore complex (NPC) is mediated through binding to nucleoporins. Upon transit of a nuclear export complex into the cytoplasm, disassembling of the complex and hydrolysis of Ran-GTP to Ran-GDP (induced by RANBP1 and RANGAP1, respectively) cause release of the cargo from the export receptor. The directionality of nuclear export is thought to be conferred by an asymmetric distribution of the GTP- and GDP-bound forms of Ran between the cytoplasm and nucleus. Involved in U3 snoRNA transport from Cajal bodies to nucleoli. Binds to late precursor U3 snoRNA bearing a TMG cap. In Mus musculus (Mouse), this protein is Exportin-1 (Xpo1).